A 469-amino-acid chain; its full sequence is 3-isopropylmalate dehydratase large subunit (469 aa).

[4Fe-4S] cluster contacts are provided by cysteine 350, cysteine 410, and cysteine 413.

It belongs to the aconitase/IPM isomerase family. LeuC type 1 subfamily. In terms of assembly, heterodimer of LeuC and LeuD. [4Fe-4S] cluster is required as a cofactor.

It catalyses the reaction (2R,3S)-3-isopropylmalate = (2S)-2-isopropylmalate. Its pathway is amino-acid biosynthesis; L-leucine biosynthesis; L-leucine from 3-methyl-2-oxobutanoate: step 2/4. Its function is as follows. Catalyzes the isomerization between 2-isopropylmalate and 3-isopropylmalate, via the formation of 2-isopropylmaleate. This Brucella melitensis biotype 2 (strain ATCC 23457) protein is 3-isopropylmalate dehydratase large subunit.